The sequence spans 969 residues: Translation initiation factor IF-2 (969 aa).

The segment covering 49 to 63 has biased composition (basic and acidic residues); the sequence is HLRKSHGATDGDKRK. 3 disordered regions span residues 49–85, 100–128, and 143–380; these read HLRKSHGATDGDKRKITLTRKHTSEIKQSDATGKART, DDVSDVAEQGQAQVAEADDDAELKRREEE, and LRER…SFQA. Low complexity predominate over residues 105-114; that stretch reads VAEQGQAQVA. Residues 143–181 are compositionally biased toward basic and acidic residues; the sequence is LRERQERLEREEAERRAREEAAEAERRRAEEEAAAKRAA. The segment covering 182–206 has biased composition (low complexity); the sequence is AEAAAAQQAAQQAAAAQQAAAPADS. Residues 209–260 show a composition bias toward basic and acidic residues; it reads DEARAAAERAAQREAAKKAEDAAREAAEKARAEQEEIRKRREAAEAEARAIR. Positions 301 to 323 are enriched in low complexity; it reads AQARPAAKKPAAAPAATPAPAGA. The segment covering 353 to 366 has biased composition (gly residues); sequence SSGGVDRGWRGGPK. A tr-type G domain is found at 469–638; the sequence is PRPPVVTVMG…LLQAEVLELK (170 aa). The G1 stretch occupies residues 478 to 485; that stretch reads GHVDHGKT. 478-485 contributes to the GTP binding site; it reads GHVDHGKT. Residues 503–507 are G2; sequence GITQH. The tract at residues 524–527 is G3; it reads DTPG. Residues 524–528 and 578–581 contribute to the GTP site; these read DTPGH and NKID. Residues 578–581 form a G4 region; the sequence is NKID. Residues 614–616 form a G5 region; it reads SAK.

Belongs to the TRAFAC class translation factor GTPase superfamily. Classic translation factor GTPase family. IF-2 subfamily.

The protein resides in the cytoplasm. Its function is as follows. One of the essential components for the initiation of protein synthesis. Protects formylmethionyl-tRNA from spontaneous hydrolysis and promotes its binding to the 30S ribosomal subunits. Also involved in the hydrolysis of GTP during the formation of the 70S ribosomal complex. This is Translation initiation factor IF-2 from Burkholderia multivorans (strain ATCC 17616 / 249).